We begin with the raw amino-acid sequence, 72 residues long: SRY-related protein ADW2 (72 aa).

The HMG box DNA-binding region spans 1–69; that stretch reads VKRPMNAFMV…KHMADYADYK (69 aa).

Its subcellular location is the nucleus. The sequence is that of SRY-related protein ADW2 from Alligator mississippiensis (American alligator).